A 347-amino-acid chain; its full sequence is Guanine nucleotide-binding protein alpha-5 subunit (347 aa).

Gly2 is lipidated: N-myristoyl glycine. The S-palmitoyl cysteine moiety is linked to residue Cys3. The region spanning 27–347 (NETKLLLLGP…KNIFNTIINY (321 aa)) is the G-alpha domain. The segment at 30 to 43 (KLLLLGPGESGKST) is G1 motif. Residues 35-42 (GPGESGKS), 170-176 (LRSRVRT), 195-199 (DVGGQ), 264-267 (NKVD), and Ala319 each bind GTP. Residues Ser42 and Thr176 each coordinate Mg(2+). The G2 motif stretch occupies residues 168 to 176 (DVLRSRVRT). The tract at residues 191–200 (FRMLDVGGQR) is G3 motif. The segment at 260-267 (IIFFNKVD) is G4 motif. The G5 motif stretch occupies residues 317-322 (TCAIDT).

The protein belongs to the G-alpha family. G(q) subfamily. As to quaternary structure, g proteins are composed of 3 units; alpha, beta and gamma. The alpha chain contains the guanine nucleotide binding site.

In terms of biological role, guanine nucleotide-binding proteins (G proteins) are involved as modulators or transducers in various transmembrane signaling systems. The polypeptide is Guanine nucleotide-binding protein alpha-5 subunit (gpaE) (Dictyostelium discoideum (Social amoeba)).